A 250-amino-acid chain; its full sequence is Lectin 1 (250 aa).

Residue asparagine 119 is glycosylated (N-linked (GlcNAc...) asparagine; partial). Mn(2+)-binding residues include glutamate 128 and aspartate 130. The Ca(2+) site is built by aspartate 130, tyrosine 132, asparagine 138, and aspartate 141. Residues aspartate 141 and histidine 146 each contribute to the Mn(2+) site.

It belongs to the leguminous lectin family.

Di-N-acetylchitobiose specific lectin. The protein is Lectin 1 of Laburnum alpinum (Scotch laburnum).